A 140-amino-acid polypeptide reads, in one-letter code: MSIMEVEVVSSEQKIYSGEATFIVVPTVQGELGIYPRHEPIMSLVRPGALRLTVPGEDKEVLVAVSGGVLEVQPDKVTVLADVAVRSAEMDQARAEEAKKAAEAGISQAKDDKALAEAHKALAAAIAQLKTLDYIRSHKK.

This sequence belongs to the ATPase epsilon chain family. F-type ATPases have 2 components, CF(1) - the catalytic core - and CF(0) - the membrane proton channel. CF(1) has five subunits: alpha(3), beta(3), gamma(1), delta(1), epsilon(1). CF(0) has three main subunits: a, b and c.

It localises to the cell inner membrane. Produces ATP from ADP in the presence of a proton gradient across the membrane. This is ATP synthase epsilon chain from Neisseria meningitidis serogroup C (strain 053442).